A 107-amino-acid polypeptide reads, in one-letter code: Large ribosomal subunit protein uL24 (107 aa).

It belongs to the universal ribosomal protein uL24 family. In terms of assembly, part of the 50S ribosomal subunit.

Functionally, one of two assembly initiator proteins, it binds directly to the 5'-end of the 23S rRNA, where it nucleates assembly of the 50S subunit. In terms of biological role, one of the proteins that surrounds the polypeptide exit tunnel on the outside of the subunit. This Nitrosomonas eutropha (strain DSM 101675 / C91 / Nm57) protein is Large ribosomal subunit protein uL24.